Consider the following 287-residue polypeptide: Undecaprenyl-diphosphatase (287 aa).

The next 6 membrane-spanning stretches (helical) occupy residues 50–70, 99–119, 128–148, 206–226, 231–251, and 263–283; these read PGVS…IAYF, IAMA…KLFW, LRSV…LAVA, FLLG…DALA, AGPL…WLAI, and TWLF…WWSI.

This sequence belongs to the UppP family.

The protein localises to the cell inner membrane. It catalyses the reaction di-trans,octa-cis-undecaprenyl diphosphate + H2O = di-trans,octa-cis-undecaprenyl phosphate + phosphate + H(+). Functionally, catalyzes the dephosphorylation of undecaprenyl diphosphate (UPP). Confers resistance to bacitracin. The polypeptide is Undecaprenyl-diphosphatase (Parasynechococcus marenigrum (strain WH8102)).